Here is a 183-residue protein sequence, read N- to C-terminus: Large ribosomal subunit protein uL5 (183 aa).

The protein belongs to the universal ribosomal protein uL5 family. As to quaternary structure, part of the 50S ribosomal subunit; part of the 5S rRNA/L5/L18/L25 subcomplex. Contacts the 5S rRNA and the P site tRNA. Forms a bridge to the 30S subunit in the 70S ribosome.

This is one of the proteins that bind and probably mediate the attachment of the 5S RNA into the large ribosomal subunit, where it forms part of the central protuberance. In the 70S ribosome it contacts protein S13 of the 30S subunit (bridge B1b), connecting the 2 subunits; this bridge is implicated in subunit movement. Contacts the P site tRNA; the 5S rRNA and some of its associated proteins might help stabilize positioning of ribosome-bound tRNAs. This chain is Large ribosomal subunit protein uL5, found in Fusobacterium nucleatum subsp. nucleatum (strain ATCC 25586 / DSM 15643 / BCRC 10681 / CIP 101130 / JCM 8532 / KCTC 2640 / LMG 13131 / VPI 4355).